The following is an 851-amino-acid chain: DNA mismatch repair protein MutS (851 aa).

602-609 contacts ATP; the sequence is GPNMSGKS.

It belongs to the DNA mismatch repair MutS family.

In terms of biological role, this protein is involved in the repair of mismatches in DNA. It is possible that it carries out the mismatch recognition step. This protein has a weak ATPase activity. This chain is DNA mismatch repair protein MutS, found in Streptococcus pyogenes serotype M2 (strain MGAS10270).